Reading from the N-terminus, the 264-residue chain is MLRLLRLALAFYGRTADPAERQGPQQQGLPQGDTQLTTVQGVVTSFCGDYGMIDESIYFSSDVVTGNVPLKVGQKVNVVVEEDKPHYGLRAIKVDVVPRHLYGAGPSDSGTRVLIGCVTSINEDNIYISNSIYFSIAIVSEDFVPYKGDLLEVEYSTEPGISNIKATSVKPIRCIHTEEVCITSVHGRNGVIDYTIFFTLDSVKLPDGYVPQVDDIVNVVMVESIQFCFIWRAISITPVHKSSSGFQDDGGLGRPKRERRSQSI.

The segment at Ser242–Ile264 is disordered. Residues Arg254–Ile264 show a composition bias toward basic residues.

In terms of assembly, interacts with GABARAP; this interaction may be important for GABARAP protein stability. Isoform 1 interacts with LAMP2; this interaction may be important for LAMP2 protein stability. Testis-specific. Expressed in spermatozoa (at protein level).

The protein localises to the cytoplasm. Its subcellular location is the cytoplasmic vesicle. It localises to the secretory vesicle. It is found in the acrosome. The protein resides in the cell projection. The protein localises to the cilium. Its subcellular location is the flagellum. Functionally, plays a role in spermatogenesis, possibly acting in the regulation of the autophagy pathway. In Homo sapiens (Human), this protein is Cancer/testis antigen 55 (CT55).